We begin with the raw amino-acid sequence, 362 residues long: N-alpha-acetyltransferase 30 (362 aa).

Over residues 1–20 the composition is skewed to pro residues; the sequence is MAEVPPGPSSLLPPPAPPAP. Disordered regions lie at residues 1 to 26, 38 to 88, and 113 to 182; these read MAEV…VEPR, CSED…NGLI, and ATTA…EEDE. Phosphoserine is present on residues serine 39 and serine 55. Residues 39 to 48 are compositionally biased toward acidic residues; it reads SEDEEDDEEH. Residue threonine 117 is modified to Phosphothreonine. The span at 149 to 165 shows a compositional bias: low complexity; the sequence is AVPSPVEAAAASDPAAA. Serine 152 is modified (phosphoserine). The segment covering 173–182 has biased composition (acidic residues); the sequence is TEQEEEEEDE. Residues serine 190, serine 196, and serine 199 each carry the phosphoserine modification. The N-acetyltransferase domain maps to 214-362; the sequence is RYVRYESELQ…DALRLKLWLR (149 aa). At lysine 233 the chain carries N6-acetyllysine.

Belongs to the acetyltransferase family. MAK3 subfamily. In terms of assembly, component of the N-terminal acetyltransferase C (NatC) complex, which is composed of NAA35, NAA38 and NAA30.

The protein resides in the cytoplasm. It localises to the nucleus. It catalyses the reaction N-terminal L-methionyl-L-leucyl-[protein] + acetyl-CoA = N-terminal N(alpha)-acetyl-L-methionyl-L-leucyl-[protein] + CoA + H(+). It carries out the reaction N-terminal L-methionyl-L-isoleucyl-[protein] + acetyl-CoA = N-terminal N(alpha)-acetyl-L-methionyl-L-isoleucyl-[protein] + CoA + H(+). The catalysed reaction is N-terminal L-methionyl-L-phenylalanyl-[protein] + acetyl-CoA = N-terminal N(alpha)-acetyl-L-methionyl-L-phenylalanyl-[protein] + CoA + H(+). The enzyme catalyses N-terminal L-methionyl-L-tryptophyl-[protein] + acetyl-CoA = N-terminal N(alpha)-acetyl-L-methionyl-L-tryptophyl-[protein] + CoA + H(+). It catalyses the reaction N-terminal L-methionyl-L-tyrosyl-[protein] + acetyl-CoA = N-terminal N(alpha)-acetyl-L-methionyl-L-tyrosyl-[protein] + CoA + H(+). Functionally, catalytic subunit of the N-terminal acetyltransferase C (NatC) complex. Catalyzes acetylation of the N-terminal methionine residues of peptides beginning with Met-Leu-Ala and Met-Leu-Gly. N-terminal acetylation protects proteins from ubiquitination and degradation by the N-end rule pathway. Necessary for the lysosomal localization and function of ARL8B sugeesting that ARL8B is a NatC substrate. The polypeptide is N-alpha-acetyltransferase 30 (NAA30) (Homo sapiens (Human)).